We begin with the raw amino-acid sequence, 75 residues long: Lividin-3 (75 aa).

The first 22 residues, 1–22, serve as a signal peptide directing secretion; it reads MFTLKKSLLLLFFLGTISLSLC. The propeptide occupies 23–40; sequence EEERDADEDEGEMTEEEV. Cysteine 69 and cysteine 75 are joined by a disulfide.

In terms of tissue distribution, expressed by the skin glands.

Its subcellular location is the secreted. Its function is as follows. Antimicrobial peptide. The chain is Lividin-3 from Odorrana livida (Green mountain frog).